The following is a 204-amino-acid chain: Large ribosomal subunit protein uL4 (204 aa).

The segment at 44–76 (KRQGTQSAKTRSEVRGGGIKPWRQKGTGRARQG) is disordered.

It belongs to the universal ribosomal protein uL4 family. As to quaternary structure, part of the 50S ribosomal subunit.

In terms of biological role, one of the primary rRNA binding proteins, this protein initially binds near the 5'-end of the 23S rRNA. It is important during the early stages of 50S assembly. It makes multiple contacts with different domains of the 23S rRNA in the assembled 50S subunit and ribosome. Forms part of the polypeptide exit tunnel. The chain is Large ribosomal subunit protein uL4 from Clostridium perfringens (strain ATCC 13124 / DSM 756 / JCM 1290 / NCIMB 6125 / NCTC 8237 / Type A).